The chain runs to 160 residues: Ribosomal RNA large subunit methyltransferase H (160 aa).

S-adenosyl-L-methionine is bound by residues Gly108 and 127 to 132 (FGKMTW).

Belongs to the RNA methyltransferase RlmH family. Homodimer.

The protein localises to the cytoplasm. The catalysed reaction is pseudouridine(1915) in 23S rRNA + S-adenosyl-L-methionine = N(3)-methylpseudouridine(1915) in 23S rRNA + S-adenosyl-L-homocysteine + H(+). Its function is as follows. Specifically methylates the pseudouridine at position 1915 (m3Psi1915) in 23S rRNA. This Beijerinckia indica subsp. indica (strain ATCC 9039 / DSM 1715 / NCIMB 8712) protein is Ribosomal RNA large subunit methyltransferase H.